Here is a 65-residue protein sequence, read N- to C-terminus: Large ribosomal subunit protein bL35 (65 aa).

It belongs to the bacterial ribosomal protein bL35 family.

The sequence is that of Large ribosomal subunit protein bL35 from Rhodospirillum rubrum (strain ATCC 11170 / ATH 1.1.1 / DSM 467 / LMG 4362 / NCIMB 8255 / S1).